Here is a 589-residue protein sequence, read N- to C-terminus: Cyclohexane-1,2-dione hydrolase (589 aa).

Position 52 (glutamate 52) interacts with thiamine diphosphate. The segment at 400–480 (NHTLPMFGGA…VITMVFTNES (81 aa)) is thiamine pyrophosphate binding. 2 residues coordinate Mg(2+): aspartate 451 and asparagine 478.

This sequence belongs to the TPP enzyme family. As to quaternary structure, homodimer. The cofactor is Mg(2+). It depends on thiamine diphosphate as a cofactor. FAD serves as cofactor.

It catalyses the reaction cyclohexan-1,2-dione + H2O = 6-oxohexanoate + H(+). Catalyzes the ring-opening cleavage of the alicyclic alcohol cyclohexane-1,2-dione. This is Cyclohexane-1,2-dione hydrolase from Azoarcus sp.